We begin with the raw amino-acid sequence, 53 residues long: Abaecin (53 aa).

A signal peptide spans 1–19; sequence MKVVIFIFALLATICAAFA.

The protein localises to the secreted. Its function is as follows. This peptide has bactericidal activity. The polypeptide is Abaecin (Apis mellifera (Honeybee)).